The primary structure comprises 248 residues: uncharacterized protein (248 aa).

6 helical membrane-spanning segments follow: residues 65 to 85 (IIIY…QFLT), 105 to 125 (SITS…ILWY), 126 to 146 (ISWT…LGFI), 156 to 176 (LCCF…TLLI), 188 to 208 (LILN…SDYS), and 222 to 242 (VIYI…YKYT).

It localises to the cell membrane. This is an uncharacterized protein from Rickettsia prowazekii (strain Madrid E).